The primary structure comprises 210 residues: Ribosomal RNA large subunit methyltransferase E (210 aa).

Glycine 61, tryptophan 63, aspartate 81, aspartate 97, and aspartate 122 together coordinate S-adenosyl-L-methionine. Catalysis depends on lysine 162, which acts as the Proton acceptor. Residues lysine 187–proline 196 show a composition bias toward basic and acidic residues. A disordered region spans residues lysine 187 to lysine 210.

This sequence belongs to the class I-like SAM-binding methyltransferase superfamily. RNA methyltransferase RlmE family.

The protein resides in the cytoplasm. It catalyses the reaction uridine(2552) in 23S rRNA + S-adenosyl-L-methionine = 2'-O-methyluridine(2552) in 23S rRNA + S-adenosyl-L-homocysteine + H(+). Its function is as follows. Specifically methylates the uridine in position 2552 of 23S rRNA at the 2'-O position of the ribose in the fully assembled 50S ribosomal subunit. This chain is Ribosomal RNA large subunit methyltransferase E, found in Stenotrophomonas maltophilia (strain R551-3).